The primary structure comprises 376 residues: Beta-centractin (376 aa).

M1 carries the N-acetylmethionine modification. 3'-nitrotyrosine is present on Y4.

Belongs to the actin family. ARP1 subfamily.

Its subcellular location is the cytoplasm. The protein resides in the cytoskeleton. It localises to the microtubule organizing center. It is found in the centrosome. In terms of biological role, component of a multi-subunit complex involved in microtubule based vesicle motility. It is associated with the centrosome. The sequence is that of Beta-centractin (Actr1b) from Mus musculus (Mouse).